We begin with the raw amino-acid sequence, 93 residues long: Cell division protein FtsB (93 aa).

Residues 1-3 are Cytoplasmic-facing; the sequence is MRI. A helical membrane pass occupies residues 4 to 21; sequence FVIALTLLFGWLQYTLWF. The Periplasmic segment spans residues 22 to 93; sequence GKNGVSDYYT…FYRIVDEEEH (72 aa). Positions 31-75 form a coiled coil; that stretch reads TVEDEIEVQQQVNSKLQARNNEMFAEIDDLRQGLDAIEERARHEL.

It belongs to the FtsB family. Part of a complex composed of FtsB, FtsL and FtsQ.

The protein localises to the cell inner membrane. In terms of biological role, essential cell division protein. May link together the upstream cell division proteins, which are predominantly cytoplasmic, with the downstream cell division proteins, which are predominantly periplasmic. The polypeptide is Cell division protein FtsB (Vibrio campbellii (strain ATCC BAA-1116)).